An 86-amino-acid chain; its full sequence is Large ribosomal subunit protein bL31B (86 aa).

Belongs to the bacterial ribosomal protein bL31 family. Type B subfamily. In terms of assembly, part of the 50S ribosomal subunit.

The protein is Large ribosomal subunit protein bL31B of Cupriavidus pinatubonensis (strain JMP 134 / LMG 1197) (Cupriavidus necator (strain JMP 134)).